A 130-amino-acid polypeptide reads, in one-letter code: Small ribosomal subunit protein uS8 (130 aa).

This sequence belongs to the universal ribosomal protein uS8 family. Part of the 30S ribosomal subunit. Contacts proteins S5 and S12.

One of the primary rRNA binding proteins, it binds directly to 16S rRNA central domain where it helps coordinate assembly of the platform of the 30S subunit. The protein is Small ribosomal subunit protein uS8 of Coxiella burnetii (strain RSA 331 / Henzerling II).